The chain runs to 458 residues: UDP-N-acetylmuramate--L-alanine ligase (458 aa).

Gly-112–Thr-118 serves as a coordination point for ATP.

The protein belongs to the MurCDEF family.

The protein localises to the cytoplasm. The catalysed reaction is UDP-N-acetyl-alpha-D-muramate + L-alanine + ATP = UDP-N-acetyl-alpha-D-muramoyl-L-alanine + ADP + phosphate + H(+). It functions in the pathway cell wall biogenesis; peptidoglycan biosynthesis. Its function is as follows. Cell wall formation. The sequence is that of UDP-N-acetylmuramate--L-alanine ligase from Syntrophotalea carbinolica (strain DSM 2380 / NBRC 103641 / GraBd1) (Pelobacter carbinolicus).